The chain runs to 632 residues: Chaperone protein DnaK (632 aa).

At Thr198 the chain carries Phosphothreonine; by autocatalysis.

The protein belongs to the heat shock protein 70 family.

Functionally, acts as a chaperone. This chain is Chaperone protein DnaK, found in Rhodopseudomonas palustris (strain BisB18).